Reading from the N-terminus, the 88-residue chain is Early E1B 9 kDa protein (88 aa).

The disordered stretch occupies residues 23-88; it reads NMEGSQDEDN…DLFPELRRLP (66 aa). The span at 34 to 44 shows a compositional bias: low complexity; that stretch reads RLLASAASGSS.

The polypeptide is Early E1B 9 kDa protein (Homo sapiens (Human)).